We begin with the raw amino-acid sequence, 68 residues long: Conotoxin Cal14.13b (68 aa).

A signal peptide spans 1 to 20; the sequence is MKLCVVIVLLMLAMPFNGGE. The propeptide occupies 21–68; sequence ASRFFNQHARSQRSGMKTRGIWCDPPCPEGETCRGGECSDEFNGDMGR. Met66 is subject to Methionine amide.

Contains 2 disulfide bonds. In terms of tissue distribution, expressed by the venom duct.

It is found in the secreted. In terms of biological role, probable neurotoxin with unknown target. Possibly targets ion channels. The protein is Conotoxin Cal14.13b of Californiconus californicus (California cone).